Consider the following 1158-residue polypeptide: ATP-dependent helicase/deoxyribonuclease subunit B (1158 aa).

ATP is bound at residue 8–15 (GRAGTGKS). [4Fe-4S] cluster-binding residues include C791, C1112, C1115, and C1121.

This sequence belongs to the helicase family. AddB/RexB type 1 subfamily. Heterodimer of AddA and AddB. Mg(2+) serves as cofactor. The cofactor is [4Fe-4S] cluster.

The heterodimer acts as both an ATP-dependent DNA helicase and an ATP-dependent, dual-direction single-stranded exonuclease. Recognizes the chi site generating a DNA molecule suitable for the initiation of homologous recombination. The AddB subunit has 5' -&gt; 3' nuclease activity but not helicase activity. This is ATP-dependent helicase/deoxyribonuclease subunit B from Clostridium perfringens (strain SM101 / Type A).